Here is a 181-residue protein sequence, read N- to C-terminus: Protein Syd (181 aa).

It belongs to the Syd family.

The protein localises to the cell inner membrane. In terms of biological role, interacts with the SecY protein in vivo. May bind preferentially to an uncomplexed state of SecY, thus functioning either as a chelating agent for excess SecY in the cell or as a regulatory factor that negatively controls the translocase function. The polypeptide is Protein Syd (Escherichia coli O17:K52:H18 (strain UMN026 / ExPEC)).